A 707-amino-acid polypeptide reads, in one-letter code: Matrix metalloproteinase-9 (707 aa).

The signal sequence occupies residues 1-19; it reads MSPRQPLVLALLVLGCCSA. Residues 20–106 constitute a propeptide, activation peptide; it reads APRRRQPTLV…PRCGVPDVGK (87 aa). N88 carries an N-linked (GlcNAc...) asparagine glycan. The Cysteine switch signature appears at 97-104; it reads PRCGVPDV. C99 is a Zn(2+) binding site. N-linked (GlcNAc...) asparagine glycosylation is found at N120 and N127. Ca(2+) contacts are provided by D131 and D165. Zn(2+) is bound by residues H175 and D177. Positions 182, 183, 185, and 187 each coordinate Ca(2+). Zn(2+) is bound at residue H190. 3 residues coordinate Ca(2+): G197, Q199, and D201. Residue H203 coordinates Zn(2+). Ca(2+) is bound by residues D205, D206, and E208. Fibronectin type-II domains lie at 225 to 273, 283 to 331, and 342 to 390; these read ADGA…FCPS, ADGK…FCPT, and SAGE…FCPD. Disulfide bonds link C230/C256, C244/C271, C288/C314, C302/C329, C347/C373, and C361/C388. H401 provides a ligand contact to Zn(2+). Residue E402 is part of the active site. The Zn(2+) site is built by H405 and H411. Residues 437–508 are disordered; sequence RGIQHLYGPN…ASPSAAPTAS (72 aa). Pro residues predominate over residues 446-467; sequence NPNPQPPATTTPEPQPTAPPTA. A compositionally biased stretch (low complexity) spans 481 to 493; it reads PTTSPTGAPSAGP. The cysteines at positions 516 and 704 are disulfide-linked. 4 Hemopexin repeats span residues 518–563, 564–608, 610–657, and 658–704; these read VNVF…WPAL, PAKL…GLGP, VPHV…FPGV, and PLNT…ILHC.

It belongs to the peptidase M10A family. In terms of assembly, exists as monomer or homodimer; disulfide-linked. Also exists as heterodimer with LCN2. Macrophages and transformed cell lines produce only the monomeric form. Interacts with ECM1. Zn(2+) is required as a cofactor. Requires Ca(2+) as cofactor. Post-translationally, N- and O-glycosylated. As to expression, osteoclasts.

It localises to the secreted. Its subcellular location is the extracellular space. The protein resides in the extracellular matrix. The enzyme catalyses Cleavage of gelatin types I and V and collagen types IV and V.. Matrix metalloproteinase that plays an essential role in local proteolysis of the extracellular matrix and in leukocyte migration. Could play a role in bone osteoclastic resorption. Cleaves KiSS1 at a Gly-|-Leu bond. Cleaves NINJ1 to generate the Secreted ninjurin-1 form. Cleaves type IV and type V collagen into large C-terminal three quarter fragments and shorter N-terminal one quarter fragments. Degrades fibronectin but not laminin or Pz-peptide. In Oryctolagus cuniculus (Rabbit), this protein is Matrix metalloproteinase-9.